Consider the following 164-residue polypeptide: Lipoprotein signal peptidase (164 aa).

3 consecutive transmembrane segments (helical) span residues 12 to 32, 70 to 90, and 102 to 122; these read WLWL…LILQ, WFFA…MYRS, and ALII…GFVV. Active-site residues include D123 and D141. Residues 137 to 157 form a helical membrane-spanning segment; the sequence is FNLADTAICVGAALIVLEGFL.

This sequence belongs to the peptidase A8 family.

It is found in the cell inner membrane. The enzyme catalyses Release of signal peptides from bacterial membrane prolipoproteins. Hydrolyzes -Xaa-Yaa-Zaa-|-(S,diacylglyceryl)Cys-, in which Xaa is hydrophobic (preferably Leu), and Yaa (Ala or Ser) and Zaa (Gly or Ala) have small, neutral side chains.. It functions in the pathway protein modification; lipoprotein biosynthesis (signal peptide cleavage). Its function is as follows. This protein specifically catalyzes the removal of signal peptides from prolipoproteins. This Escherichia coli O6:K15:H31 (strain 536 / UPEC) protein is Lipoprotein signal peptidase.